The sequence spans 218 residues: Probable chemoreceptor glutamine deamidase CheD (218 aa).

It belongs to the CheD family.

It carries out the reaction L-glutaminyl-[protein] + H2O = L-glutamyl-[protein] + NH4(+). Functionally, probably deamidates glutamine residues to glutamate on methyl-accepting chemotaxis receptors (MCPs), playing an important role in chemotaxis. This is Probable chemoreceptor glutamine deamidase CheD from Saccharophagus degradans (strain 2-40 / ATCC 43961 / DSM 17024).